An 82-amino-acid polypeptide reads, in one-letter code: Delta-actitoxin-Aeq2b 3 (82 aa).

Positions 1–19 are cleaved as a signal peptide; the sequence is MNRLMILVFAAVILALASA. A propeptide spanning residues 20 to 26 is cleaved from the precursor; the sequence is DEDVDIT. Disulfide bonds link cysteine 32-cysteine 79, cysteine 34-cysteine 69, and cysteine 62-cysteine 80.

The protein belongs to the sea anemone sodium channel inhibitory toxin family. Type I subfamily.

It localises to the secreted. The protein resides in the nematocyst. In terms of biological role, binds specifically to voltage-gated sodium channels (Nav), thereby delaying their inactivation during signal transduction. Causes death to crabs. The protein is Delta-actitoxin-Aeq2b 3 of Actinia equina (Beadlet anemone).